The chain runs to 100 residues: Large ribosomal subunit protein uL23 (100 aa).

It belongs to the universal ribosomal protein uL23 family. In terms of assembly, part of the 50S ribosomal subunit. Contacts protein L29, and trigger factor when it is bound to the ribosome.

Functionally, one of the early assembly proteins it binds 23S rRNA. One of the proteins that surrounds the polypeptide exit tunnel on the outside of the ribosome. Forms the main docking site for trigger factor binding to the ribosome. The protein is Large ribosomal subunit protein uL23 of Vibrio vulnificus (strain CMCP6).